The sequence spans 263 residues: Small ribosomal subunit protein uS3 (263 aa).

Positions V39–R107 constitute a KH type-2 domain. The segment at G211–E263 is disordered. Residues T219 to R240 are compositionally biased toward basic and acidic residues.

This sequence belongs to the universal ribosomal protein uS3 family. As to quaternary structure, part of the 30S ribosomal subunit. Forms a tight complex with proteins S10 and S14.

Functionally, binds the lower part of the 30S subunit head. Binds mRNA in the 70S ribosome, positioning it for translation. The sequence is that of Small ribosomal subunit protein uS3 from Bordetella petrii (strain ATCC BAA-461 / DSM 12804 / CCUG 43448).